Reading from the N-terminus, the 490-residue chain is Betaine aldehyde dehydrogenase (490 aa).

Thr-26, Ile-27, and Asp-93 together coordinate K(+). 150 to 152 (GAW) lines the NAD(+) pocket. Residue Lys-162 is the Charge relay system of the active site. An NAD(+)-binding site is contributed by 176–179 (KPSE). Val-180 lines the K(+) pocket. 230-233 (GVAS) lines the NAD(+) pocket. Residue Leu-246 coordinates K(+). Catalysis depends on Glu-252, which acts as the Proton acceptor. The NAD(+) site is built by Gly-254, Cys-286, and Glu-387. Cys-286 serves as the catalytic Nucleophile. Position 286 is a cysteine sulfenic acid (-SOH) (Cys-286). Positions 457 and 460 each coordinate K(+). Glu-464 functions as the Charge relay system in the catalytic mechanism.

Belongs to the aldehyde dehydrogenase family. Dimer of dimers. Requires K(+) as cofactor.

It catalyses the reaction betaine aldehyde + NAD(+) + H2O = glycine betaine + NADH + 2 H(+). Its pathway is amine and polyamine biosynthesis; betaine biosynthesis via choline pathway; betaine from betaine aldehyde: step 1/1. Its function is as follows. Involved in the biosynthesis of the osmoprotectant glycine betaine. Catalyzes the irreversible oxidation of betaine aldehyde to the corresponding acid. In Escherichia coli (strain ATCC 8739 / DSM 1576 / NBRC 3972 / NCIMB 8545 / WDCM 00012 / Crooks), this protein is Betaine aldehyde dehydrogenase.